A 1228-amino-acid chain; its full sequence is Probable phospholipid-transporting ATPase 5 (1228 aa).

Topologically, residues 1-74 (MARGRIRSKL…TTRYNLITFF (74 aa)) are cytoplasmic. A helical transmembrane segment spans residues 75–96 (PKSLYEQFHRAANLYFLVAAIL). The Extracellular portion of the chain corresponds to 97-100 (SVFP). A helical transmembrane segment spans residues 101–123 (LSPFNKWSMIAPLVFVVGLSMLK). Over 124–305 (EALEDWRRFM…SRIERTMDYI (182 aa)) the chain is Cytoplasmic. The chain crosses the membrane as a helical span at residues 306–327 (IYTLLVLLILISCISSSGFAWE). The Extracellular segment spans residues 328–359 (TEFHMPKMWYLRPGEPIDFTNPINPIYAGVVH). A helical membrane pass occupies residues 360-377 (LITALLLYGYLIPISLYV). At 378 to 934 (SIEVVKVWQA…HGHWCYKRIA (557 aa)) the chain is on the cytoplasmic side. Asp-425 acts as the 4-aspartylphosphate intermediate in catalysis. Residue Lys-616 forms a Glycyl lysine isopeptide (Lys-Gly) (interchain with G-Cter in ubiquitin) linkage. Asp-879 and Asp-883 together coordinate Mg(2+). A helical transmembrane segment spans residues 935–954 (QMICYFFYKNIAFGLTLFYF). Residues 955-968 (EAFTGFSGQSVYND) lie on the Extracellular side of the membrane. The chain crosses the membrane as a helical span at residues 969-988 (YYLLLFNVVLTSLPVIALGV). The Cytoplasmic portion of the chain corresponds to 989–1018 (FEQDVSSEICLQFPALYQQGTKNLFFDWSR). The chain crosses the membrane as a helical span at residues 1019–1041 (ILGWMCNGVYASLVIFFLNIGII). Topologically, residues 1042–1054 (YSQAFRDNGQTAD) are extracellular. Residues 1055–1077 (MDAVGTTMFTCIIWAANVQIALT) form a helical membrane-spanning segment. The Cytoplasmic segment spans residues 1078-1083 (MSHFTW). The chain crosses the membrane as a helical span at residues 1084 to 1104 (IQHVLIWGSIGMWYLFVAIYS). Residues 1105-1117 (MMPPSYSGNIYRI) are Extracellular-facing. Residues 1118–1146 (LDEILAPAPIYWMATLLVTVAAVLPYVAH) form a helical membrane-spanning segment. The Cytoplasmic segment spans residues 1147-1228 (IAFQRFLNPL…AQDAMSPRSL (82 aa)).

Belongs to the cation transport ATPase (P-type) (TC 3.A.3) family. Type IV subfamily.

It is found in the membrane. It carries out the reaction ATP + H2O + phospholipidSide 1 = ADP + phosphate + phospholipidSide 2.. Functionally, involved in transport of phospholipids. This is Probable phospholipid-transporting ATPase 5 from Arabidopsis thaliana (Mouse-ear cress).